The following is a 526-amino-acid chain: MSYSQQVNKRRTFAIISHPDAGKTTITEKVLLYGNAIQKAGSVKGKGSQAHAKSDWMEMEKQRGISITTSVMQFPYHDCLVNLLDTPGHEDFSEDTYRTLTAVDSCLMVIDSAKGVEERTIKLMDVTRLRDTPILTFMNKLDRDIRDPMELLDEVESVLKIRCAPITWPIGCGKLFKGVYHLYKDETYLYQSGQGHTIQDVRIVKGLNNADLDRAVGEDLARQLRDELELVKGASNEFDHDLFIRGELTPVFFGTALGNFGVDHFLDGLTQWAPAPQARQADCRLVESAEEKLTGFVFKIQANMDPKHRDRVAFMRIVSGKYEKGMKLKQVRLGKEVVLSDALTFMAGDRSHAEEAYAGDIIGLHNHGTIQIGDTFTQGEDLKFTGIPNFAPELFRRIRLKDPLKQKQLLKGLVQLSEEGAVQVFRPLTNNDLIVGAVGVLQFDVVVSRLKSEYNVEAVYETVNVATARWVECSEAKKLEEFKRKNEQNLALDGGDSLTYIAPTMVNLNLTQERYPDIQFFKTREH.

Residues 8 to 277 (NKRRTFAIIS…GLTQWAPAPQ (270 aa)) form the tr-type G domain. GTP contacts are provided by residues 17 to 24 (SHPDAGKT), 85 to 89 (DTPGH), and 139 to 142 (NKLD).

Belongs to the TRAFAC class translation factor GTPase superfamily. Classic translation factor GTPase family. PrfC subfamily.

The protein localises to the cytoplasm. Increases the formation of ribosomal termination complexes and stimulates activities of RF-1 and RF-2. It binds guanine nucleotides and has strong preference for UGA stop codons. It may interact directly with the ribosome. The stimulation of RF-1 and RF-2 is significantly reduced by GTP and GDP, but not by GMP. This chain is Peptide chain release factor 3, found in Histophilus somni (strain 2336) (Haemophilus somnus).